We begin with the raw amino-acid sequence, 493 residues long: Cytochrome c-552 (493 aa).

Residues 1-25 (MEKKLKSWQGWLLFCGAMAVVFVLG) form the signal peptide. Histidine 116 provides a ligand contact to heme c. The heme site is built by cysteine 144, cysteine 147, and lysine 148. Cysteine 182, cysteine 185, histidine 186, cysteine 224, cysteine 227, and histidine 228 together coordinate heme c. Residues glutamate 230, tyrosine 231, lysine 276, and glutamine 278 each contribute to the Ca(2+) site. Tyrosine 231 contacts substrate. Histidine 279 contacts substrate. Heme c is bound by residues histidine 290, cysteine 297, cysteine 300, histidine 301, histidine 315, cysteine 328, cysteine 331, histidine 332, and histidine 407.

This sequence belongs to the cytochrome c-552 family. Requires Ca(2+) as cofactor. Heme c serves as cofactor.

Its subcellular location is the periplasm. The enzyme catalyses 6 Fe(III)-[cytochrome c] + NH4(+) + 2 H2O = 6 Fe(II)-[cytochrome c] + nitrite + 8 H(+). Its pathway is nitrogen metabolism; nitrate reduction (assimilation). Functionally, catalyzes the reduction of nitrite to ammonia, consuming six electrons in the process. This is Cytochrome c-552 from Bacteroides fragilis (strain ATCC 25285 / DSM 2151 / CCUG 4856 / JCM 11019 / LMG 10263 / NCTC 9343 / Onslow / VPI 2553 / EN-2).